We begin with the raw amino-acid sequence, 240 residues long: uncharacterized protein (240 aa).

The span at 197–210 shows a compositional bias: polar residues; it reads PLKSHSASRLNHLT. The interval 197-222 is disordered; that stretch reads PLKSHSASRLNHLTPSPRPGETPLEN.

This is an uncharacterized protein from Caenorhabditis elegans.